The chain runs to 77 residues: UPF0349 protein lwe2340 (77 aa).

This sequence belongs to the UPF0349 family.

This Listeria welshimeri serovar 6b (strain ATCC 35897 / DSM 20650 / CCUG 15529 / CIP 8149 / NCTC 11857 / SLCC 5334 / V8) protein is UPF0349 protein lwe2340.